We begin with the raw amino-acid sequence, 1411 residues long: Tectonin beta-propeller repeat-containing protein 2 (1411 aa).

WD repeat units lie at residues 23–66 (IPTK…HLNQ), 67–114 (MRKY…PGRN), 115–161 (KQLR…LDQG), 162–203 (LCNS…EKSV), 204–265 (RQIG…AGGV), 266–309 (KPFE…EYSI), and 310–343 (YLLDTVNQATVAGLEGSGDIVSVSCTENEIFFLK). Disordered regions lie at residues 379 to 439 (QAEK…GSQP), 463 to 542 (VKRK…QENT), 579 to 637 (RELL…GPQS), and 758 to 779 (YAHGLPSSSSETSVTELGPSCS). The span at 400–420 (SSVASEPRSRSSSLNSTDSGS) shows a compositional bias: low complexity. Polar residues-rich tracts occupy residues 475–489 (GSRSTCHSSLESTPC), 496–542 (SPQS…QENT), 608–621 (PNSTQLPFQEQDSS), and 763–779 (PSSSSETSVTELGPSCS). 6 TECPR repeats span residues 945 to 976 (NVVWALTEQRALLYREGVSSFCPEGEQWKCDI), 994 to 1027 (QTLWALDIHGNLWFRTGIISKKPQGDDDHWWQVS), 1179 to 1209 (DALWALDSLGQVFIRTLSKSCPTGMHWTRLD), 1226 to 1259 (QHIWACDSRGGVYFRVGTQPLNPSLMLPAWIMIE), 1279 to 1310 (QMLWVLDSRWNVHVRTGITEEMPVGTAWEHVP), and 1322 to 1353 (RTVWARCPNGDLARRYGVTDKNPAGDYWKKIP). Positions 1388 to 1411 (HGTQKSSQAAMPHPEDLEDEWEVI) are disordered.

It belongs to the WD repeat KIAA0329 family. As to quaternary structure, interacts with the ATG8 family members GABARAP, GABARAPL1, GABARAPL2, MAP1LC3B and MAP1LC3C. In terms of tissue distribution, detected in skin fibroblast (at protein level).

In terms of biological role, probably plays a role as positive regulator of autophagy. This chain is Tectonin beta-propeller repeat-containing protein 2 (TECPR2), found in Homo sapiens (Human).